The chain runs to 396 residues: Putative cyclin-B3-1 (396 aa).

Positions 1–98 (MLRDGNKQSK…KVLDVTAKPK (98 aa)) are disordered. A compositionally biased stretch (polar residues) spans 21 to 32 (KTTVKTSLQNRS). The span at 39–57 (VGRSKSRSISSIPSSAVAS) shows a compositional bias: low complexity. Residues 76-85 (GESSSSGNKD) show a composition bias toward polar residues.

It belongs to the cyclin family. Cyclin AB subfamily.

In Arabidopsis thaliana (Mouse-ear cress), this protein is Putative cyclin-B3-1 (CYCB3-1).